The primary structure comprises 350 residues: UDP-3-O-acylglucosamine N-acyltransferase (350 aa).

His240 functions as the Proton acceptor in the catalytic mechanism.

The protein belongs to the transferase hexapeptide repeat family. LpxD subfamily. Homotrimer.

The catalysed reaction is a UDP-3-O-[(3R)-3-hydroxyacyl]-alpha-D-glucosamine + a (3R)-hydroxyacyl-[ACP] = a UDP-2-N,3-O-bis[(3R)-3-hydroxyacyl]-alpha-D-glucosamine + holo-[ACP] + H(+). It functions in the pathway bacterial outer membrane biogenesis; LPS lipid A biosynthesis. Its function is as follows. Catalyzes the N-acylation of UDP-3-O-acylglucosamine using 3-hydroxyacyl-ACP as the acyl donor. Is involved in the biosynthesis of lipid A, a phosphorylated glycolipid that anchors the lipopolysaccharide to the outer membrane of the cell. This chain is UDP-3-O-acylglucosamine N-acyltransferase, found in Methylobacillus flagellatus (strain ATCC 51484 / DSM 6875 / VKM B-1610 / KT).